Consider the following 424-residue polypeptide: UDP-N-acetylglucosamine 1-carboxyvinyltransferase (424 aa).

22 to 23 (KN) is a binding site for phosphoenolpyruvate. UDP-N-acetyl-alpha-D-glucosamine is bound at residue R93. C117 (proton donor) is an active-site residue. C117 is modified (2-(S-cysteinyl)pyruvic acid O-phosphothioketal). UDP-N-acetyl-alpha-D-glucosamine-binding positions include 122–126 (RPVDL), 162–165 (KVSV), D307, and I329.

It belongs to the EPSP synthase family. MurA subfamily.

The protein resides in the cytoplasm. It catalyses the reaction phosphoenolpyruvate + UDP-N-acetyl-alpha-D-glucosamine = UDP-N-acetyl-3-O-(1-carboxyvinyl)-alpha-D-glucosamine + phosphate. Its pathway is cell wall biogenesis; peptidoglycan biosynthesis. In terms of biological role, cell wall formation. Adds enolpyruvyl to UDP-N-acetylglucosamine. The polypeptide is UDP-N-acetylglucosamine 1-carboxyvinyltransferase (Haemophilus influenzae (strain PittEE)).